The primary structure comprises 198 residues: MEILNGPSGWIEVICGGMYSGKSEELIRRVRRAQIAKQKVQVFKHSLDIRYDKDYVASHTGLKIEAIPVSSSADIERLVEDDTQVVAIEEGQFFDMGIVKVCQRLADKGKRVIVAGLDQDFRGEPFGPMPYLMAVAEYVDKLHAICMKCGNVASRTQRIIDGKPAYYDDPIILVGAFETYEARCRNCHIVLRRDENEK.

Residues 16–23 and 89–92 contribute to the ATP site; these read GGMYSGKS and EEGQ. The active-site Proton acceptor is Glu90. Zn(2+) contacts are provided by Cys146, Cys149, Cys184, and Cys187.

The protein belongs to the thymidine kinase family. In terms of assembly, homotetramer.

It is found in the cytoplasm. It catalyses the reaction thymidine + ATP = dTMP + ADP + H(+). The polypeptide is Thymidine kinase (Dictyoglomus thermophilum (strain ATCC 35947 / DSM 3960 / H-6-12)).